Reading from the N-terminus, the 219-residue chain is Putative protease Do-like 6, chloroplastic (219 aa).

The N-terminal 45 residues, 1–45, are a transit peptide targeting the chloroplast; that stretch reads MLFRSVHHIVARFSNSTSTPIHRFFYSPSLLRRRSSFNASLISRC. Positions 61-216 are serine protease; sequence KIFSFSREPN…YSGQINKKIY (156 aa). Active-site charge relay system residues include histidine 99, aspartate 130, and serine 208.

Belongs to the peptidase S1B family.

It localises to the plastid. Its subcellular location is the chloroplast. Its function is as follows. Putative serine protease. This chain is Putative protease Do-like 6, chloroplastic (DEGP6), found in Arabidopsis thaliana (Mouse-ear cress).